A 193-amino-acid chain; its full sequence is Cilia- and flagella-associated protein 20 (193 aa).

It belongs to the CFAP20 family. In terms of assembly, microtubule inner protein component of sperm flagellar doublet microtubules.

The protein resides in the nucleus. It localises to the cytoplasm. It is found in the cytoskeleton. Its subcellular location is the microtubule organizing center. The protein localises to the centrosome. The protein resides in the centriole. It localises to the cilium basal body. It is found in the cilium axoneme. Its subcellular location is the flagellum axoneme. Functionally, cilium- and flagellum-specific protein that plays a role in axonemal structure organization and motility. Microtubule inner protein (MIP) part of the dynein-decorated doublet microtubules (DMTs) in cilia axoneme, which is required for motile cilia beating. Involved in the regulation of the size and morphology of cilia. Required for axonemal microtubules polyglutamylation. In Homo sapiens (Human), this protein is Cilia- and flagella-associated protein 20.